The sequence spans 323 residues: Beta-ketoacyl-[acyl-carrier-protein] synthase III (323 aa).

Catalysis depends on residues Cys-114 and His-250. The interval Gln-251 to Arg-255 is ACP-binding. The active site involves Asn-280.

The protein belongs to the thiolase-like superfamily. FabH family. Homodimer.

It is found in the cytoplasm. The enzyme catalyses malonyl-[ACP] + acetyl-CoA + H(+) = 3-oxobutanoyl-[ACP] + CO2 + CoA. Its pathway is lipid metabolism; fatty acid biosynthesis. Functionally, catalyzes the condensation reaction of fatty acid synthesis by the addition to an acyl acceptor of two carbons from malonyl-ACP. Catalyzes the first condensation reaction which initiates fatty acid synthesis and may therefore play a role in governing the total rate of fatty acid production. Possesses both acetoacetyl-ACP synthase and acetyl transacylase activities. Its substrate specificity determines the biosynthesis of branched-chain and/or straight-chain of fatty acids. This chain is Beta-ketoacyl-[acyl-carrier-protein] synthase III, found in Hyphomonas neptunium (strain ATCC 15444).